Here is a 38-residue protein sequence, read N- to C-terminus: Odorant-binding protein 2 (38 aa).

This sequence belongs to the calycin superfamily. Lipocalin family. Nasal mucosa.

Its subcellular location is the secreted. It localises to the extracellular space. Functionally, this soluble protein may play a specific role in odor discrimination and perception. This chain is Odorant-binding protein 2, found in Hystrix cristata (North African crested porcupine).